The primary structure comprises 637 residues: Threonine--tRNA ligase (637 aa).

One can recognise a TGS domain in the interval 1–61 (MVTVTLPDGS…DADAQLAIVT (61 aa)). The catalytic stretch occupies residues 244 to 535 (DHRRLAKQLD…LIEHHAGNFP (292 aa)). 3 residues coordinate Zn(2+): Cys335, His386, and His512.

This sequence belongs to the class-II aminoacyl-tRNA synthetase family. In terms of assembly, homodimer. The cofactor is Zn(2+).

It is found in the cytoplasm. The catalysed reaction is tRNA(Thr) + L-threonine + ATP = L-threonyl-tRNA(Thr) + AMP + diphosphate + H(+). Functionally, catalyzes the attachment of threonine to tRNA(Thr) in a two-step reaction: L-threonine is first activated by ATP to form Thr-AMP and then transferred to the acceptor end of tRNA(Thr). Also edits incorrectly charged L-seryl-tRNA(Thr). This chain is Threonine--tRNA ligase, found in Thiobacillus denitrificans (strain ATCC 25259 / T1).